Consider the following 342-residue polypeptide: Pyrophosphate--fructose 6-phosphate 1-phosphotransferase (342 aa).

Diphosphate is bound at residue glycine 10. Position 103 (glutamate 103) interacts with Mg(2+). Substrate contacts are provided by residues 126 to 128 (TID), arginine 163, 170 to 172 (MGR), glutamate 222, arginine 266, and 272 to 275 (HVQR). The active-site Proton acceptor is aspartate 128.

It belongs to the phosphofructokinase type A (PFKA) family. Mixed-substrate PFK group III subfamily. Homodimer or homotetramer. Mg(2+) serves as cofactor.

It localises to the cytoplasm. The catalysed reaction is beta-D-fructose 6-phosphate + diphosphate = beta-D-fructose 1,6-bisphosphate + phosphate + H(+). The protein operates within carbohydrate degradation; glycolysis; D-glyceraldehyde 3-phosphate and glycerone phosphate from D-glucose: step 3/4. Its activity is regulated as follows. Non-allosteric. Catalyzes the phosphorylation of D-fructose 6-phosphate, the first committing step of glycolysis. Uses inorganic phosphate (PPi) as phosphoryl donor instead of ATP like common ATP-dependent phosphofructokinases (ATP-PFKs), which renders the reaction reversible, and can thus function both in glycolysis and gluconeogenesis. Consistently, PPi-PFK can replace the enzymes of both the forward (ATP-PFK) and reverse (fructose-bisphosphatase (FBPase)) reactions. The protein is Pyrophosphate--fructose 6-phosphate 1-phosphotransferase of Streptomyces coelicolor (strain ATCC BAA-471 / A3(2) / M145).